We begin with the raw amino-acid sequence, 533 residues long: 2-succinyl-5-enolpyruvyl-6-hydroxy-3-cyclohexene-1-carboxylate synthase (533 aa).

This sequence belongs to the TPP enzyme family. MenD subfamily. As to quaternary structure, homodimer. Mg(2+) serves as cofactor. The cofactor is Mn(2+). It depends on thiamine diphosphate as a cofactor.

It carries out the reaction isochorismate + 2-oxoglutarate + H(+) = 5-enolpyruvoyl-6-hydroxy-2-succinyl-cyclohex-3-ene-1-carboxylate + CO2. Its pathway is quinol/quinone metabolism; 1,4-dihydroxy-2-naphthoate biosynthesis; 1,4-dihydroxy-2-naphthoate from chorismate: step 2/7. The protein operates within quinol/quinone metabolism; menaquinone biosynthesis. Functionally, catalyzes the thiamine diphosphate-dependent decarboxylation of 2-oxoglutarate and the subsequent addition of the resulting succinic semialdehyde-thiamine pyrophosphate anion to isochorismate to yield 2-succinyl-5-enolpyruvyl-6-hydroxy-3-cyclohexene-1-carboxylate (SEPHCHC). This is 2-succinyl-5-enolpyruvyl-6-hydroxy-3-cyclohexene-1-carboxylate synthase from Akkermansia muciniphila (strain ATCC BAA-835 / DSM 22959 / JCM 33894 / BCRC 81048 / CCUG 64013 / CIP 107961 / Muc).